A 126-amino-acid polypeptide reads, in one-letter code: Nascent polypeptide-associated complex protein (126 aa).

The NAC-A/B domain occupies 10-77 (PRMMKQMQKM…AKKVAKAEEK (68 aa)).

It belongs to the NAC-alpha family. In terms of assembly, homodimer. Interacts with the ribosome. Binds ribosomal RNA.

In terms of biological role, contacts the emerging nascent chain on the ribosome. The chain is Nascent polypeptide-associated complex protein from Methanococcus maripaludis (strain C6 / ATCC BAA-1332).